The following is an 82-amino-acid chain: Turripeptide IX-07 (82 aa).

An N-terminal signal peptide occupies residues 1-21; sequence MGFYMLLTVALLLTSLMNVEA. The propeptide occupies 22–39; it reads TPVNQAERSALEKSGLGN. Intrachain disulfides connect Cys48–Cys70, Cys55–Cys74, and Cys60–Cys81.

Expressed by the venom duct.

Its subcellular location is the secreted. The polypeptide is Turripeptide IX-07 (Gemmula speciosa (Splendid gem-turris)).